Reading from the N-terminus, the 121-residue chain is Large ribosomal subunit protein bL19 (121 aa).

The protein belongs to the bacterial ribosomal protein bL19 family.

Functionally, this protein is located at the 30S-50S ribosomal subunit interface and may play a role in the structure and function of the aminoacyl-tRNA binding site. The protein is Large ribosomal subunit protein bL19 of Porphyromonas gingivalis (strain ATCC BAA-308 / W83).